Here is a 309-residue protein sequence, read N- to C-terminus: Ribonuclease Z (309 aa).

Zn(2+)-binding residues include H63, H65, D67, H68, H145, D216, and H274. D67 acts as the Proton acceptor in catalysis.

Belongs to the RNase Z family. As to quaternary structure, homodimer. Requires Zn(2+) as cofactor.

It catalyses the reaction Endonucleolytic cleavage of RNA, removing extra 3' nucleotides from tRNA precursor, generating 3' termini of tRNAs. A 3'-hydroxy group is left at the tRNA terminus and a 5'-phosphoryl group is left at the trailer molecule.. Functionally, zinc phosphodiesterase, which displays some tRNA 3'-processing endonuclease activity. Probably involved in tRNA maturation, by removing a 3'-trailer from precursor tRNA. This Streptococcus pneumoniae (strain 70585) protein is Ribonuclease Z.